Here is a 146-residue protein sequence, read N- to C-terminus: Peptide methionine sulfoxide reductase MsrB (146 aa).

The MsrB domain occupies Ser-6–Lys-129. Cys-118 acts as the Nucleophile in catalysis.

The protein belongs to the MsrB Met sulfoxide reductase family.

The enzyme catalyses L-methionyl-[protein] + [thioredoxin]-disulfide + H2O = L-methionyl-(R)-S-oxide-[protein] + [thioredoxin]-dithiol. The sequence is that of Peptide methionine sulfoxide reductase MsrB from Brucella melitensis biotype 1 (strain ATCC 23456 / CCUG 17765 / NCTC 10094 / 16M).